The primary structure comprises 508 residues: Endoglucanase 6 (508 aa).

A signal peptide spans 1–33 (MLAASLRVEAVAVVAAAVLVLLLSPAAVVVVAG). Asp-89 functions as the Nucleophile in the catalytic mechanism. Active-site residues include His-419, Asp-471, and Glu-480.

It belongs to the glycosyl hydrolase 9 (cellulase E) family.

It localises to the secreted. The catalysed reaction is Endohydrolysis of (1-&gt;4)-beta-D-glucosidic linkages in cellulose, lichenin and cereal beta-D-glucans.. This Oryza sativa subsp. japonica (Rice) protein is Endoglucanase 6.